The sequence spans 149 residues: MVLTKDEFDSLLHELDPKIDTEEHRMELGLGAYTELFAAHPEYIKKFSRLQEATPANVMAQDGAKYYAKTLINDLVELLKASTDEATLNTAIARTATKDHKPRNVSGAEFQTGEPIFIKYFSHVLTTPANQAFMEKLLTKIFTGVAGQL.

A Globin domain is found at 2–149 (VLTKDEFDSL…KIFTGVAGQL (148 aa)). A heme-binding site is contributed by histidine 100.

Belongs to the globin family. As to quaternary structure, monomer.

Functionally, oxygen binding protein. This chain is Globin, found in Isoparorchis hypselobagri (Giant trematode).